The following is a 527-amino-acid chain: Cytochrome b5 reductase 4 (527 aa).

The disordered stretch occupies residues 1-24 (MLNVPSQAFPAAGSQQRVAPAGQS). The Cytochrome b5 heme-binding domain maps to 56 to 132 (LIEVTEDELK…LKECLVGRMA (77 aa)). Heme contacts are provided by His-91 and His-114. A disordered region spans residues 138–171 (ALQAHTEKTESTHLNGLSAPPSLRPEPLSAPLPA). One can recognise a CS domain in the interval 173–264 (DHRPRYDWFQ…SVKEKWTQLG (92 aa)). Residues 281 to 392 (LFYRECVLLS…GGPEGSFTLR (112 aa)) enclose the FAD-binding FR-type domain. Residues 372 to 387 (ANLP…GPEG) and 399 to 431 (HLYM…KMKL) contribute to the FAD site.

The protein belongs to the flavoprotein pyridine nucleotide cytochrome reductase family. The cofactor is FAD.

The protein resides in the endoplasmic reticulum. It catalyses the reaction 2 Fe(III)-[cytochrome b5] + NADH = 2 Fe(II)-[cytochrome b5] + NAD(+) + H(+). Functionally, NADH-cytochrome b5 reductase involved in endoplasmic reticulum stress response pathway. This Danio rerio (Zebrafish) protein is Cytochrome b5 reductase 4 (cyb5r4).